The chain runs to 211 residues: Stromal cell-derived factor 2 (211 aa).

The first 18 residues, 1 to 18 (MAVLSLLLLGGLWSAVGA), serve as a signal peptide directing secretion. 3 MIR domains span residues 21-75 (MAVV…IRGK), 83-138 (GTPI…VLCN), and 139-193 (GPYW…AMEG).

As to expression, ubiquitously expressed with highest expression in liver and kidney.

It is found in the secreted. This chain is Stromal cell-derived factor 2 (Sdf2), found in Mus musculus (Mouse).